Here is a 75-residue protein sequence, read N- to C-terminus: Large ribosomal subunit protein bL31 (75 aa).

This sequence belongs to the bacterial ribosomal protein bL31 family. Type A subfamily. As to quaternary structure, part of the 50S ribosomal subunit.

In terms of biological role, binds the 23S rRNA. This chain is Large ribosomal subunit protein bL31, found in Chlorobium luteolum (strain DSM 273 / BCRC 81028 / 2530) (Pelodictyon luteolum).